The following is a 208-amino-acid chain: 3-demethoxyubiquinol 3-hydroxylase (208 aa).

The Fe cation site is built by Glu57, Glu87, His90, Glu139, Glu171, and His174.

This sequence belongs to the COQ7 family. Fe cation is required as a cofactor.

The protein localises to the cell membrane. It carries out the reaction a 5-methoxy-2-methyl-3-(all-trans-polyprenyl)benzene-1,4-diol + AH2 + O2 = a 3-demethylubiquinol + A + H2O. It participates in cofactor biosynthesis; ubiquinone biosynthesis. In terms of biological role, catalyzes the hydroxylation of 2-nonaprenyl-3-methyl-6-methoxy-1,4-benzoquinol during ubiquinone biosynthesis. In Burkholderia ambifaria (strain ATCC BAA-244 / DSM 16087 / CCUG 44356 / LMG 19182 / AMMD) (Burkholderia cepacia (strain AMMD)), this protein is 3-demethoxyubiquinol 3-hydroxylase.